Here is a 90-residue protein sequence, read N- to C-terminus: Probable Fe(2+)-trafficking protein (90 aa).

Belongs to the Fe(2+)-trafficking protein family.

Its function is as follows. Could be a mediator in iron transactions between iron acquisition and iron-requiring processes, such as synthesis and/or repair of Fe-S clusters in biosynthetic enzymes. This Vibrio vulnificus (strain CMCP6) protein is Probable Fe(2+)-trafficking protein.